A 284-amino-acid chain; its full sequence is 4-hydroxy-3-methylbut-2-enyl diphosphate reductase (284 aa).

[4Fe-4S] cluster is bound at residue Cys-12. (2E)-4-hydroxy-3-methylbut-2-enyl diphosphate-binding residues include His-40 and His-72. Dimethylallyl diphosphate is bound by residues His-40 and His-72. Isopentenyl diphosphate is bound by residues His-40 and His-72. Cys-94 serves as a coordination point for [4Fe-4S] cluster. (2E)-4-hydroxy-3-methylbut-2-enyl diphosphate is bound at residue His-122. Residue His-122 participates in dimethylallyl diphosphate binding. An isopentenyl diphosphate-binding site is contributed by His-122. Residue Glu-124 is the Proton donor of the active site. Thr-161 is a (2E)-4-hydroxy-3-methylbut-2-enyl diphosphate binding site. Position 193 (Cys-193) interacts with [4Fe-4S] cluster. Ser-221, Asn-223, and Ser-264 together coordinate (2E)-4-hydroxy-3-methylbut-2-enyl diphosphate. Dimethylallyl diphosphate-binding residues include Ser-221, Asn-223, and Ser-264. The isopentenyl diphosphate site is built by Ser-221, Asn-223, and Ser-264.

It belongs to the IspH family. [4Fe-4S] cluster serves as cofactor.

It catalyses the reaction isopentenyl diphosphate + 2 oxidized [2Fe-2S]-[ferredoxin] + H2O = (2E)-4-hydroxy-3-methylbut-2-enyl diphosphate + 2 reduced [2Fe-2S]-[ferredoxin] + 2 H(+). It carries out the reaction dimethylallyl diphosphate + 2 oxidized [2Fe-2S]-[ferredoxin] + H2O = (2E)-4-hydroxy-3-methylbut-2-enyl diphosphate + 2 reduced [2Fe-2S]-[ferredoxin] + 2 H(+). It participates in isoprenoid biosynthesis; dimethylallyl diphosphate biosynthesis; dimethylallyl diphosphate from (2E)-4-hydroxy-3-methylbutenyl diphosphate: step 1/1. It functions in the pathway isoprenoid biosynthesis; isopentenyl diphosphate biosynthesis via DXP pathway; isopentenyl diphosphate from 1-deoxy-D-xylulose 5-phosphate: step 6/6. In terms of biological role, catalyzes the conversion of 1-hydroxy-2-methyl-2-(E)-butenyl 4-diphosphate (HMBPP) into a mixture of isopentenyl diphosphate (IPP) and dimethylallyl diphosphate (DMAPP). Acts in the terminal step of the DOXP/MEP pathway for isoprenoid precursor biosynthesis. This is 4-hydroxy-3-methylbut-2-enyl diphosphate reductase from Dehalococcoides mccartyi (strain ATCC BAA-2266 / KCTC 15142 / 195) (Dehalococcoides ethenogenes (strain 195)).